We begin with the raw amino-acid sequence, 477 residues long: Cysteine--tRNA ligase (477 aa).

Cysteine 28 contacts Zn(2+). The 'HIGH' region signature appears at 30–40 (PTVYDYPHLGH). The Zn(2+) site is built by cysteine 208, histidine 233, and glutamate 237. A 'KMSKS' region motif is present at residues 265-269 (KMSKS). Lysine 268 serves as a coordination point for ATP.

The protein belongs to the class-I aminoacyl-tRNA synthetase family. Zn(2+) serves as cofactor.

It is found in the cytoplasm. The catalysed reaction is tRNA(Cys) + L-cysteine + ATP = L-cysteinyl-tRNA(Cys) + AMP + diphosphate. This Pyrococcus furiosus (strain ATCC 43587 / DSM 3638 / JCM 8422 / Vc1) protein is Cysteine--tRNA ligase.